The chain runs to 1065 residues: Tubulin glycylase 3C (1065 aa).

Disordered regions lie at residues 1 to 146 (MSSL…REDK), 158 to 182 (IREQ…TKSK), 301 to 326 (STQK…DIAK), 341 to 360 (EKKR…KEQL), 381 to 482 (FFVD…GNGS), and 708 to 755 (NKQK…EKQM). A compositionally biased stretch (low complexity) spans 23–53 (QEGNQEDLNNQNDHNLNNNELDSLSSPPSDN). Residues 54-63 (YNEEEFEQED) show a composition bias toward acidic residues. A compositionally biased stretch (polar residues) spans 73 to 92 (QNASQNNISQTQRISQTQLP). The segment covering 122 to 146 (LMEKKKKEQEEKEKKELKLKKREDK) has biased composition (basic and acidic residues). Over residues 166 to 179 (LESQTEQSDHSNVT) the composition is skewed to polar residues. Residues 313–326 (EGDKEKDDKKDIAK) show a composition bias toward basic and acidic residues. Basic and acidic residues predominate over residues 385 to 403 (VPEKKPKKEKKKNESKEDN). A compositionally biased stretch (polar residues) spans 404-423 (IQITSPKLNSTKSLSSQITR). The span at 424–450 (KTNDAKKVEKLPKIKDSNKENHSKERN) shows a compositional bias: basic and acidic residues. Over residues 451–479 (EDNEEGDDGEYECDEGDEGASDGEDEDDG) the composition is skewed to acidic residues. The region spanning 633-1009 (YFEKDPDIEK…DYGMEKSKKA (377 aa)) is the TTL domain. Residues 709 to 721 (KQKPKKKKKKSKK) are compositionally biased toward basic residues. Residues 722–733 (DKQQGDTEKKEE) are compositionally biased toward basic and acidic residues. Over residues 734-754 (EEGEAEDEEEDEEDEEEEEKQ) the composition is skewed to acidic residues. ATP is bound by residues 821–824 (QKYI), Lys834, and Asp836.

The protein resides in the cell projection. Its subcellular location is the cilium. The protein localises to the cytoplasm. It localises to the cytoskeleton. It is found in the cilium axoneme. Probable glycylase which modifies tubulin, generating side chains of glycine on the gamma-carboxyl groups of specific glutamate residues within the C-terminal tail of tubulin. The polypeptide is Tubulin glycylase 3C (TTLL3C) (Tetrahymena thermophila (strain SB210)).